A 189-amino-acid polypeptide reads, in one-letter code: UPF0398 protein LVIS_0849 (189 aa).

It belongs to the UPF0398 family.

This Levilactobacillus brevis (strain ATCC 367 / BCRC 12310 / CIP 105137 / JCM 1170 / LMG 11437 / NCIMB 947 / NCTC 947) (Lactobacillus brevis) protein is UPF0398 protein LVIS_0849.